The primary structure comprises 416 residues: UDP-N-acetylmuramoylalanine--D-glutamate ligase (416 aa).

108–114 contacts ATP; it reads GTTGKTT.

It belongs to the MurCDEF family.

Its subcellular location is the cytoplasm. It catalyses the reaction UDP-N-acetyl-alpha-D-muramoyl-L-alanine + D-glutamate + ATP = UDP-N-acetyl-alpha-D-muramoyl-L-alanyl-D-glutamate + ADP + phosphate + H(+). Its pathway is cell wall biogenesis; peptidoglycan biosynthesis. Its function is as follows. Cell wall formation. Catalyzes the addition of glutamate to the nucleotide precursor UDP-N-acetylmuramoyl-L-alanine (UMA). The sequence is that of UDP-N-acetylmuramoylalanine--D-glutamate ligase from Chlamydia trachomatis serovar L2 (strain ATCC VR-902B / DSM 19102 / 434/Bu).